A 1246-amino-acid chain; its full sequence is Superkiller complex protein 2 (1246 aa).

The disordered stretch occupies residues 220–246 (LGGGDEDENEAVGQPGGPRGDTVSASP). Serine 245 and serine 256 each carry phosphoserine. One can recognise a Helicase ATP-binding domain in the interval 319–475 (ILHLERHDSV…WIGRLKRRQI (157 aa)). 332 to 339 (AHTSAGKT) provides a ligand contact to ATP. The short motif at 423 to 426 (DEVH) is the DEVH box element. Positions 585–755 (GLTSLDLTTS…LTYTMILNLL (171 aa)) constitute a Helicase C-terminal domain.

It belongs to the helicase family. SKI2 subfamily. As to quaternary structure, component of the SKI complex which consists of SKIC2, SKIC3 and SKIC8. Interacts with HBS1L isoform 2.

The protein localises to the nucleus. It localises to the cytoplasm. It catalyses the reaction ATP + H2O = ADP + phosphate + H(+). Functionally, helicase component of the SKI complex, a multiprotein complex that assists the RNA-degrading exosome during the mRNA decay and quality-control pathways. The SKI complex catalyzes mRNA extraction from 80S ribosomal complexes in the 3'-5' direction and channels mRNA to the cytosolic exosome for degradation. SKI-mediated extraction of mRNA from stalled ribosomes allow binding of the Pelota-HBS1L complex and subsequent ribosome disassembly by ABCE1 for ribosome recycling. In the nucleus, the SKI complex associates with transcriptionally active genes in a manner dependent on PAF1 complex (PAF1C). This chain is Superkiller complex protein 2, found in Homo sapiens (Human).